A 546-amino-acid chain; its full sequence is Capsid protein VP1 (546 aa).

The disordered stretch occupies residues 1–38 (MMMASKDAPQSADGASGAGQLVPEVNTADPLPMEPVAG). The interval 1-226 (MMMASKDAPQ…FLFLVPPTIE (226 aa)) is shell domain. A P1 sub-domain 1 region spans residues 227–279 (QKTRAFTVPNIPLQTLSNSRFPSLIQGMILSPDASQVVQFQNGRCLIDGQLLG). The protruding domain stretch occupies residues 227–545 (QKTRAFTVPN…TARGRLGVRR (319 aa)). Residues 280 to 416 (TTPATSGQLF…GSSLSQAANL (137 aa)) are P2 sub-domain. A P1 sub-domain 2 region spans residues 417–546 (APPVFPPGFG…ARGRLGVRRI (130 aa)). The tract at residues 538–545 (RGRLGVRR) is plays a role in binding to host histo-blood group structures antigens and in the formation of P-particles.

This sequence belongs to the caliciviridae capsid protein family. In terms of assembly, homodimer. Homomultimer. Interacts with the minor capsid protein VP2. Interacts (via C-terminus) with host type I histo-blood group structures antigens at the surface of target cells. Post-translationally, may be cleaved by host protease to generate soluble capsid protein. Assembled capsid cannot be cleaved.

Its subcellular location is the virion. The protein localises to the host cytoplasm. Functionally, capsid protein self assembles to form an icosahedral capsid with a T=3 symmetry, about 38 nm in diameter, and consisting of 180 capsid proteins. A smaller form of capsid with a diameter of 23 nm might be capsid proteins assembled as icosahedron with T=1 symmetry. The capsid encapsulates the genomic RNA and is decorated with VP2 proteins. Attaches virion to target cells by binding histo-blood group antigens (HBGAs) present on gastroduodenal epithelial cells. The soluble capsid protein may play a role in viral immunoevasion. This chain is Capsid protein VP1, found in Southampton virus (strain GI/Human/United Kingdom/Southampton/1991) (SHV).